A 157-amino-acid polypeptide reads, in one-letter code: uncharacterized protein (157 aa).

In terms of domain architecture, N-acetyltransferase spans 9–146 (LLINYKTLDE…GDFYVWHPET (138 aa)).

This is an uncharacterized protein from Bacillus anthracis (strain CDC 684 / NRRL 3495).